Here is a 356-residue protein sequence, read N- to C-terminus: Histidinol-phosphate aminotransferase (356 aa).

Residue Lys-211 is modified to N6-(pyridoxal phosphate)lysine.

Belongs to the class-II pyridoxal-phosphate-dependent aminotransferase family. Histidinol-phosphate aminotransferase subfamily. As to quaternary structure, homodimer. Pyridoxal 5'-phosphate serves as cofactor.

The catalysed reaction is L-histidinol phosphate + 2-oxoglutarate = 3-(imidazol-4-yl)-2-oxopropyl phosphate + L-glutamate. Its pathway is amino-acid biosynthesis; L-histidine biosynthesis; L-histidine from 5-phospho-alpha-D-ribose 1-diphosphate: step 7/9. The sequence is that of Histidinol-phosphate aminotransferase from Aeromonas hydrophila subsp. hydrophila (strain ATCC 7966 / DSM 30187 / BCRC 13018 / CCUG 14551 / JCM 1027 / KCTC 2358 / NCIMB 9240 / NCTC 8049).